A 197-amino-acid chain; its full sequence is Holliday junction branch migration complex subunit RuvA (197 aa).

The interval 1–63 (MYAYLKGIIT…EDAHLLYGFR (63 aa)) is domain I. The segment at 64–142 (SEDEKKLFLS…VAGDDLPAKV (79 aa)) is domain II. Positions 143–147 (AVQAS) are flexible linker. Residues 148 to 197 (AENQELEEAMEAMLALGYKATELKKIKKFFEGTTDTAENYIKSALKMLVK) form a domain III region.

Belongs to the RuvA family. As to quaternary structure, homotetramer. Forms an RuvA(8)-RuvB(12)-Holliday junction (HJ) complex. HJ DNA is sandwiched between 2 RuvA tetramers; dsDNA enters through RuvA and exits via RuvB. An RuvB hexamer assembles on each DNA strand where it exits the tetramer. Each RuvB hexamer is contacted by two RuvA subunits (via domain III) on 2 adjacent RuvB subunits; this complex drives branch migration. In the full resolvosome a probable DNA-RuvA(4)-RuvB(12)-RuvC(2) complex forms which resolves the HJ.

The protein localises to the cytoplasm. Functionally, the RuvA-RuvB-RuvC complex processes Holliday junction (HJ) DNA during genetic recombination and DNA repair, while the RuvA-RuvB complex plays an important role in the rescue of blocked DNA replication forks via replication fork reversal (RFR). RuvA specifically binds to HJ cruciform DNA, conferring on it an open structure. The RuvB hexamer acts as an ATP-dependent pump, pulling dsDNA into and through the RuvAB complex. HJ branch migration allows RuvC to scan DNA until it finds its consensus sequence, where it cleaves and resolves the cruciform DNA. The sequence is that of Holliday junction branch migration complex subunit RuvA from Streptococcus pneumoniae (strain Hungary19A-6).